The chain runs to 280 residues: Urease accessory protein UreD 1 (280 aa).

This sequence belongs to the UreD family. As to quaternary structure, ureD, UreF and UreG form a complex that acts as a GTP-hydrolysis-dependent molecular chaperone, activating the urease apoprotein by helping to assemble the nickel containing metallocenter of UreC. The UreE protein probably delivers the nickel.

Its subcellular location is the cytoplasm. Its function is as follows. Required for maturation of urease via the functional incorporation of the urease nickel metallocenter. The protein is Urease accessory protein UreD 1 of Brucella abortus biovar 1 (strain 9-941).